We begin with the raw amino-acid sequence, 1257 residues long: Period circadian protein homolog 2 (1257 aa).

The tract at residues 1-60 (MNGYVDFSPSPTSPTKEPGAPQPTQAVLQEDVDMSSGSSGNENCSTGRDSQGSDCDDNGK) is disordered. A compositionally biased stretch (polar residues) spans 35 to 53 (SSGSSGNENCSTGRDSQGS). The Nuclear export signal 1 signature appears at 109-118 (LIRTLKELKV). The PAS 1 domain maps to 179 to 246 (ITSEYIVKNA…FHSYTTPYKL (68 aa)). The short motif at 306 to 310 (LCCLL) is the LXXLL element. The PAS 2 domain maps to 319–385 (YEAPRIPPEK…MLAIHKKILQ (67 aa)). Positions 393-436 (YSPIRFRTRNGEYITLDTSWSSFINPWSRKISFIIGRHKVRVGP) constitute a PAC domain. The Nuclear export signal 2 signature appears at 460 to 469 (LTEQIHRLLM). Disordered stretches follow at residues 471 to 565 (PVPH…GASL) and 617 to 638 (PSRK…PSKV). Residues 478-482 (SGYGS) are important for protein stability. The segment covering 493-504 (MSQTSSSDSNGQ) has biased composition (polar residues). A CSNK1E binding domain region spans residues 510–709 (RRSGIFKTSG…GAAGGLSQEK (200 aa)). 5 positions are modified to phosphoserine: S525, S528, S531, S538, and S544. A Phosphothreonine modification is found at T554. A phosphoserine mark is found at S659, S693, S697, S706, S758, and S763. The tract at residues 757 to 832 (RSRAQASDRG…SDTSQSSCPS (76 aa)) is disordered. The Nuclear localization signal signature appears at 778–794 (KKTGKNRKLKSKRVKTR). The span at 779–792 (KTGKNRKLKSKRVK) shows a compositional bias: basic residues. Residues 821–832 (SPSDTSQSSCPS) show a composition bias toward low complexity. Residue T858 is modified to Phosphothreonine. The tract at residues 882 to 1067 (EFAVQPLPFA…DLCSATGSAL (186 aa)) is interaction with PPARG. S939 is modified (phosphoserine). T964 carries the phosphothreonine modification. Phosphoserine is present on S971. The Nuclear export signal 3 motif lies at 983-990 (LQLNLLQL). Residues 994–1044 (PEGSTGAAGTLGTTGTAASGLDCTSGTSRDRQPKAPPTCNEPSDTQNSDAI) form a disordered region. Positions 996–1014 (GSTGAAGTLGTTGTAASGL) are enriched in low complexity. Over residues 1033–1044 (NEPSDTQNSDAI) the composition is skewed to polar residues. Residues 1051–1055 (LNLLL) carry the LXXLL motif. Residues 1070-1092 (SGASATSDSLGSSSLGFGTSQSG) show a composition bias toward low complexity. The disordered stretch occupies residues 1070 to 1115 (SGASATSDSLGSSSLGFGTSQSGAGSSDTSHTSKYFGSIDSSENNH). Positions 1093–1111 (AGSSDTSHTSKYFGSIDSS) are enriched in polar residues. S1126 bears the Phosphoserine mark. Residues 1157–1257 (SRDLQAVLKE…LTGPRIEAQT (101 aa)) form a CRY binding domain region. Residues 1224–1257 (PYEEDSPSPGLCDTSEAKEEEGEQLTGPRIEAQT) form a disordered region.

In terms of assembly, homodimer. Component of the circadian core oscillator, which includes the CRY proteins, CLOCK or NPAS2, BMAL1 or BMAL2, CSNK1D and/or CSNK1E, TIMELESS, and the PER proteins. Interacts with CLOCK-BMAL1 (off DNA). Interacts with BMAL2. Interacts directly with PER1 and PER3, and through a C-terminal domain, with CRY1 and CRY2. Interacts (via PAS 2 domain) with TIMELESS. Interacts with NFIL3. Different large complexes have been identified with different repressive functions. The core of PER complexes is composed of at least PER1, PER2, PER3, CRY1, CRY2, CSNK1D and/or CSNK1E. The large PER complex involved in the repression of transcriptional termination is composed of at least PER2, CDK9, DDX5, DHX9, NCBP1 and POLR2A (active). The large PER complex involved in the histone deacetylation is composed of at least HDAC1, PER2, SFPQ and SIN3A. The large PER complex involved in the histone methylation is composed of at least PER2, CBX3, TRIM28, SUV39H1 and/or SUV39H2; CBX3 mediates the formation of the complex. Interacts with SETX; the interaction inhibits termination of circadian target genes. Interacts with the nuclear receptors HNF4A, NR1D1, NR4A2, RORA, PPARA, PPARG and THRA; the interaction with at least PPARG is ligand dependent. Interacts with PML. Interacts (phosphorylated) with BTRC and FBXW11; the interactions trigger proteasomal degradation. Interacts with NONO and SFPQ. Interacts with CAVIN3. Interacts with MAGEL2. Interacts with MAP1LC3B. Interacts with HNF4A. Acetylated. Deacetylated by SIRT1, resulting in decreased protein stability. Deacetylated by SIRT6, preventing its degradation by the proteasome, resulting in increased protein stability. Post-translationally, phosphorylated by CSNK1E and CSNK1D. Phosphorylation results in PER2 protein degradation. May be dephosphorylated by PP1. In terms of processing, ubiquitinated, leading to its proteasomal degradation. Ubiquitination may be inhibited by CRY1. In terms of tissue distribution, in the brain, high expression in SCN during the subjective day. Constitutive expression in the cornu ammonis and in the dentate gyrus of the hippocampus. Also expressed in the piriform cortex and the glomeruli of the olfactory bulb, and at a lower extent in the cerebral cortex. Not expressed in the pars tuberalis and the Purkinje neurons. Also expressed in adipose tissue (white and brown), heart, kidney, bladder, lumbar spinal cord, skeletal muscle, spleen, lung, pancreas and liver with highest levels in skeletal muscle and liver and lowest levels in spleen.

It is found in the nucleus. The protein resides in the cytoplasm. The protein localises to the perinuclear region. In terms of biological role, transcriptional repressor which forms a core component of the circadian clock. The circadian clock, an internal time-keeping system, regulates various physiological processes through the generation of approximately 24 hour circadian rhythms in gene expression, which are translated into rhythms in metabolism and behavior. It is derived from the Latin roots 'circa' (about) and 'diem' (day) and acts as an important regulator of a wide array of physiological functions including metabolism, sleep, body temperature, blood pressure, endocrine, immune, cardiovascular, and renal function. Consists of two major components: the central clock, residing in the suprachiasmatic nucleus (SCN) of the brain, and the peripheral clocks that are present in nearly every tissue and organ system. Both the central and peripheral clocks can be reset by environmental cues, also known as Zeitgebers (German for 'timegivers'). The predominant Zeitgeber for the central clock is light, which is sensed by retina and signals directly to the SCN. The central clock entrains the peripheral clocks through neuronal and hormonal signals, body temperature and feeding-related cues, aligning all clocks with the external light/dark cycle. Circadian rhythms allow an organism to achieve temporal homeostasis with its environment at the molecular level by regulating gene expression to create a peak of protein expression once every 24 hours to control when a particular physiological process is most active with respect to the solar day. Transcription and translation of core clock components (CLOCK, NPAS2, BMAL1, BMAL2, PER1, PER2, PER3, CRY1 and CRY2) plays a critical role in rhythm generation, whereas delays imposed by post-translational modifications (PTMs) are important for determining the period (tau) of the rhythms (tau refers to the period of a rhythm and is the length, in time, of one complete cycle). A diurnal rhythm is synchronized with the day/night cycle, while the ultradian and infradian rhythms have a period shorter and longer than 24 hours, respectively. Disruptions in the circadian rhythms contribute to the pathology of cardiovascular diseases, cancer, metabolic syndrome and aging. A transcription/translation feedback loop (TTFL) forms the core of the molecular circadian clock mechanism. Transcription factors, CLOCK or NPAS2 and BMAL1 or BMAL2, form the positive limb of the feedback loop, act in the form of a heterodimer and activate the transcription of core clock genes and clock-controlled genes (involved in key metabolic processes), harboring E-box elements (5'-CACGTG-3') within their promoters. The core clock genes: PER1/2/3 and CRY1/2 which are transcriptional repressors form the negative limb of the feedback loop and interact with the CLOCK|NPAS2-BMAL1|BMAL2 heterodimer inhibiting its activity and thereby negatively regulating their own expression. This heterodimer also activates nuclear receptors NR1D1/2 and RORA/B/G, which form a second feedback loop and which activate and repress BMAL1 transcription, respectively. PER1 and PER2 proteins transport CRY1 and CRY2 into the nucleus with appropriate circadian timing, but also contribute directly to repression of clock-controlled target genes through interaction with several classes of RNA-binding proteins, helicases and others transcriptional repressors. PER appears to regulate circadian control of transcription by at least three different modes. First, interacts directly with the CLOCK-BMAL1 at the tail end of the nascent transcript peak to recruit complexes containing the SIN3-HDAC that remodel chromatin to repress transcription. Second, brings H3K9 methyltransferases such as SUV39H1 and SUV39H2 to the E-box elements of the circadian target genes, like PER2 itself or PER1. The recruitment of each repressive modifier to the DNA seems to be very precisely temporally orchestrated by the large PER complex, the deacetylases acting before than the methyltransferases. Additionally, large PER complexes are also recruited to the target genes 3' termination site through interactions with RNA-binding proteins and helicases that may play a role in transcription termination to regulate transcription independently of CLOCK-BMAL1 interactions. Recruitment of large PER complexes to the elongating polymerase at PER and CRY termination sites inhibited SETX action, impeding RNA polymerase II release and thereby repressing transcriptional reinitiation. May propagate clock information to metabolic pathways via the interaction with nuclear receptors. Coactivator of PPARA and corepressor of NR1D1, binds rhythmically at the promoter of nuclear receptors target genes like BMAL1 or G6PC1. Directly and specifically represses PPARG proadipogenic activity by blocking PPARG recruitment to target promoters and thereby transcriptional activation. Required for fatty acid and lipid metabolism, is involved as well in the regulation of circulating insulin levels. Plays an important role in the maintenance of cardiovascular functions through the regulation of NO and vasodilatatory prostaglandins production in aortas. Controls circadian glutamate uptake in synaptic vesicles through the regulation of VGLUT1 expression. May also be involved in the regulation of inflammatory processes. Represses the CLOCK-BMAL1 induced transcription of BHLHE40/DEC1 and ATF4. Negatively regulates the formation of the TIMELESS-CRY1 complex by competing with TIMELESS for binding to CRY1. This is Period circadian protein homolog 2 (Per2) from Mus musculus (Mouse).